We begin with the raw amino-acid sequence, 113 residues long: U11-theraphotoxin-Hhn1a (113 aa).

The signal sequence occupies residues 1–21 (MNTVRVTFLLVFVLAVSLGQT). Positions 22 to 74 (DKDENRMEMQEKTEQGKSYLDFAENLLLQKLEELEAKLLEEDSEESRNSRQKR) are excised as a propeptide. Cystine bridges form between C75-C90, C82-C95, and C89-C110.

This sequence belongs to the neurotoxin 14 (magi-1) family. 01 (HNTX-16) subfamily. Expressed by the venom gland.

The protein localises to the secreted. Functionally, probable ion channel inhibitor. In Cyriopagopus hainanus (Chinese bird spider), this protein is U11-theraphotoxin-Hhn1a.